The following is a 441-amino-acid chain: Ribosomal protein uS12 methylthiotransferase RimO (441 aa).

The region spanning 8 to 118 (PKIGFVSLGC…VLEHVHHYVP (111 aa)) is the MTTase N-terminal domain. Residues Cys-17, Cys-53, Cys-82, Cys-150, Cys-154, and Cys-157 each coordinate [4Fe-4S] cluster. Positions 136–373 (LTPRHYAYLK…MQLQQQISAE (238 aa)) constitute a Radical SAM core domain. In terms of domain architecture, TRAM spans 376-441 (QEKVGREILV…DEYDLWGSRV (66 aa)).

This sequence belongs to the methylthiotransferase family. RimO subfamily. It depends on [4Fe-4S] cluster as a cofactor.

The protein localises to the cytoplasm. It catalyses the reaction L-aspartate(89)-[ribosomal protein uS12]-hydrogen + (sulfur carrier)-SH + AH2 + 2 S-adenosyl-L-methionine = 3-methylsulfanyl-L-aspartate(89)-[ribosomal protein uS12]-hydrogen + (sulfur carrier)-H + 5'-deoxyadenosine + L-methionine + A + S-adenosyl-L-homocysteine + 2 H(+). In terms of biological role, catalyzes the methylthiolation of an aspartic acid residue of ribosomal protein uS12. This Citrobacter koseri (strain ATCC BAA-895 / CDC 4225-83 / SGSC4696) protein is Ribosomal protein uS12 methylthiotransferase RimO.